Here is a 93-residue protein sequence, read N- to C-terminus: Signal recognition particle 19 kDa protein (93 aa).

Belongs to the SRP19 family. As to quaternary structure, part of the signal recognition particle protein translocation system, which is composed of SRP and FtsY. Archaeal SRP consists of a 7S RNA molecule of 300 nucleotides and two protein subunits: SRP54 and SRP19.

The protein resides in the cytoplasm. Its function is as follows. Involved in targeting and insertion of nascent membrane proteins into the cytoplasmic membrane. Binds directly to 7S RNA and mediates binding of the 54 kDa subunit of the SRP. This Haloquadratum walsbyi (strain DSM 16790 / HBSQ001) protein is Signal recognition particle 19 kDa protein.